A 287-amino-acid polypeptide reads, in one-letter code: Protease HtpX (287 aa).

Helical transmembrane passes span 4 to 24 (ILLF…VLNI) and 36 to 56 (LSGL…ISLL). Position 143 (His-143) interacts with Zn(2+). Residue Glu-144 is part of the active site. His-147 serves as a coordination point for Zn(2+). 2 consecutive transmembrane segments (helical) span residues 158-178 (LMQG…ANIV) and 192-212 (MVYF…ASFI). Zn(2+) is bound at residue Glu-221.

The protein belongs to the peptidase M48B family. The cofactor is Zn(2+).

The protein localises to the cell inner membrane. The sequence is that of Protease HtpX from Vibrio cholerae serotype O1 (strain ATCC 39315 / El Tor Inaba N16961).